Consider the following 218-residue polypeptide: Protein-methionine-sulfoxide reductase heme-binding subunit MsrQ (218 aa).

A run of 5 helical transmembrane segments spans residues 14 to 34 (LVHA…WQVW), 60 to 80 (LLLI…AVVI), 86 to 106 (LGLY…TLDL), 121 to 141 (PYIT…ITST), and 155 to 175 (LHML…WLVK).

The protein belongs to the MsrQ family. In terms of assembly, heterodimer of a catalytic subunit (MsrP) and a heme-binding subunit (MsrQ). FMN serves as cofactor. It depends on heme b as a cofactor.

The protein localises to the cell inner membrane. In terms of biological role, part of the MsrPQ system that repairs oxidized periplasmic proteins containing methionine sulfoxide residues (Met-O), using respiratory chain electrons. Thus protects these proteins from oxidative-stress damage caused by reactive species of oxygen and chlorine generated by the host defense mechanisms. MsrPQ is essential for the maintenance of envelope integrity under bleach stress, rescuing a wide series of structurally unrelated periplasmic proteins from methionine oxidation. MsrQ provides electrons for reduction to the reductase catalytic subunit MsrP, using the quinone pool of the respiratory chain. The polypeptide is Protein-methionine-sulfoxide reductase heme-binding subunit MsrQ (Xanthomonas axonopodis pv. citri (strain 306)).